We begin with the raw amino-acid sequence, 201 residues long: Putative Ras-related protein Rab-1C (201 aa).

GTP contacts are provided by residues 15 to 23 (GDSGVGKSC), 33 to 40 (YTESYIST), and 63 to 67 (DTAGQ). An Effector region motif is present at residues 37–45 (YISTIGVDF). Residue serine 76 is modified to (Microbial infection) O-(2-cholinephosphoryl)serine. GTP contacts are provided by residues 121-124 (NKSD) and 151-153 (SAK). A disordered region spans residues 174 to 201 (GPGAASGGERPNLKIDSTPVKPAGGGCC). Residues cysteine 200 and cysteine 201 are each lipidated (S-geranylgeranyl cysteine).

This sequence belongs to the small GTPase superfamily. Rab family. (Microbial infection) Phosphocholinated at Ser-76 by L.pneumophila AnkX, leading to displace GDP dissociation inhibitors (GDI). Both GDP-bound and GTP-bound forms can be phosphocholinated. Dephosphocholinated by L.pneumophila Lem3, restoring accessibility to L.pneumophila GTPase effector LepB. Post-translationally, (Microbial infection) Glycosylated by S.typhimurium protein Ssek3: arginine GlcNAcylation prevents GTPase activity, thereby disrupting vesicular protein transport from the endoplasmic reticulum (ER) to the Golgi compartment.

It is found in the membrane. The protein resides in the cytoplasm. The enzyme catalyses GTP + H2O = GDP + phosphate + H(+). Protein transport. Probably involved in vesicular traffic. This Homo sapiens (Human) protein is Putative Ras-related protein Rab-1C (RAB1C).